Consider the following 879-residue polypeptide: Leucine--tRNA ligase (879 aa).

Residues 45–55 (PYPSGALHMGH) carry the 'HIGH' region motif. Positions 637–641 (KMSKS) match the 'KMSKS' region motif. Lys640 is an ATP binding site.

Belongs to the class-I aminoacyl-tRNA synthetase family.

The protein localises to the cytoplasm. It catalyses the reaction tRNA(Leu) + L-leucine + ATP = L-leucyl-tRNA(Leu) + AMP + diphosphate. The sequence is that of Leucine--tRNA ligase from Xylella fastidiosa (strain M23).